The primary structure comprises 122 residues: Urease subunit beta (122 aa).

Residues 92–122 (GLRPEYAGELDGRGHEPTAPNYGEKGQGHFE) form a disordered region.

The protein belongs to the urease beta subunit family. As to quaternary structure, heterotrimer of UreA (gamma), UreB (beta) and UreC (alpha) subunits. Three heterotrimers associate to form the active enzyme.

It is found in the cytoplasm. It catalyses the reaction urea + 2 H2O + H(+) = hydrogencarbonate + 2 NH4(+). It functions in the pathway nitrogen metabolism; urea degradation; CO(2) and NH(3) from urea (urease route): step 1/1. This chain is Urease subunit beta, found in Saccharopolyspora erythraea (strain ATCC 11635 / DSM 40517 / JCM 4748 / NBRC 13426 / NCIMB 8594 / NRRL 2338).